The sequence spans 597 residues: Alkyldihydroxyacetonephosphate synthase (597 aa).

Residues 131 to 313 enclose the FAD-binding PCMH-type domain; the sequence is IPRLPDIVVW…SEVTIKIFPI (183 aa). Residues 163–169, 232–238, 245–248, and 297–303 contribute to the FAD site; these read PIGGGTS, DSIEFST, TRAS, and EGTLGVV. A substrate-binding site is contributed by Arg444. The active-site Proton donor/acceptor is Tyr507. The interval 544–546 is important for enzyme activity; the sequence is HHH. The short motif at 595–597 is the Microbody targeting signal element; the sequence is CKL.

It belongs to the FAD-binding oxidoreductase/transferase type 4 family. In terms of assembly, homodimer. The cofactor is FAD.

Its subcellular location is the peroxisome. The enzyme catalyses a long chain fatty alcohol + a 1-acylglycerone 3-phosphate = a 1-O-alkylglycerone 3-phosphate + a long-chain fatty acid + H(+). The protein operates within glycerolipid metabolism; ether lipid biosynthesis. Its function is as follows. Catalyzes the exchange of an acyl for a long-chain alkyl group and the formation of the ether bond in the biosynthesis of ether phospholipids. This is Alkyldihydroxyacetonephosphate synthase (ads-1) from Caenorhabditis elegans.